Reading from the N-terminus, the 369-residue chain is Protein HGH1 homolog (369 aa).

This sequence belongs to the HGH1 family.

This Drosophila melanogaster (Fruit fly) protein is Protein HGH1 homolog.